A 208-amino-acid polypeptide reads, in one-letter code: MNQRYPSALLENAVNELASLPGVGRKTALRLALYMLRRDVGYTENFAAALVALRRDVKYCKVCHNICDDEVCSICANPSRDHSLVCVVENIKEVMAIENTGQFRGVYHVLGGIISPMDGIGPGDLRIDSLVRRVAEGEVKEIILALSTTMEGDTTNFFIYRKLSGYDVRISVIARGVSIGDEIEYADEITLGRSIINRTEFNLTSSNS.

The C4-type zinc-finger motif lies at 60–75 (CKVCHNICDDEVCSIC). The Toprim domain maps to 83-178 (SLVCVVENIK…RISVIARGVS (96 aa)).

It belongs to the RecR family.

In terms of biological role, may play a role in DNA repair. It seems to be involved in an RecBC-independent recombinational process of DNA repair. It may act with RecF and RecO. In Parabacteroides distasonis (strain ATCC 8503 / DSM 20701 / CIP 104284 / JCM 5825 / NCTC 11152), this protein is Recombination protein RecR.